The chain runs to 149 residues: Natriuretic peptides A (149 aa).

A signal peptide spans 1-23 (MGSPIAASFLLFLAVQLLGQTGA). Propeptides lie at residues 24 to 121 (NPVY…AAPR) and 91 to 101 (DGGALGRSPWD). Residues 49 to 103 (MPLEDEAESPQALSEQNAEAGAALSPLPEVPPWTGEVSPAQRDGGALGRSPWDSS) form a disordered region. Phosphoserine is present on Ser127. A disulfide bridge links Cys128 with Cys144. The tract at residues 145 to 149 (NSFRY) is important for degradation of atrial natriuretic peptide by IDE.

This sequence belongs to the natriuretic peptide family. In terms of assembly, homodimer; disulfide-linked antiparallel dimer. The precursor molecule is proteolytically cleaved by CORIN at Arg-121 to produce the atrial natriuretic peptide. Undergoes further proteolytic cleavage by unknown proteases to give rise to long-acting natriuretic peptide, vessel dilator and kaliuretic peptide. Additional processing gives rise to the auriculin and atriopeptin peptides. In the kidneys, alternative processing by an unknown protease results in the peptide urodilatin. Post-translationally, cleavage by MME initiates degradation of the factor and thereby regulates its activity. Degradation by IDE results in reduced activation of NPR1 (in vitro). During IDE degradation, the resulting products can temporarily stimulate NPR2 to produce cGMP, before the fragments are completely degraded and inactivated by IDE (in vitro). In terms of processing, degraded by IDE. Phosphorylation on Ser-127 decreases vasorelaxant activity.

It localises to the secreted. Its subcellular location is the perikaryon. The protein localises to the cell projection. Hormone that plays a key role in mediating cardio-renal homeostasis, and is involved in vascular remodeling and regulating energy metabolism. Acts by specifically binding and stimulating NPR1 to produce cGMP, which in turn activates effector proteins, such as PRKG1, that drive various biological responses. Regulates vasodilation, natriuresis, diuresis and aldosterone synthesis and is therefore essential for regulating blood pressure, controlling the extracellular fluid volume and maintaining the fluid-electrolyte balance. Also involved in inhibiting cardiac remodeling and cardiac hypertrophy by inducing cardiomyocyte apoptosis and attenuating the growth of cardiomyocytes and fibroblasts. Plays a role in female pregnancy by promoting trophoblast invasion and spiral artery remodeling in uterus, and thus prevents pregnancy-induced hypertension. In adipose tissue, acts in various cGMP- and PKG-dependent pathways to regulate lipid metabolism and energy homeostasis. This includes up-regulating lipid metabolism and mitochondrial oxygen utilization by activating the AMP-activated protein kinase (AMPK), and increasing energy expenditure by acting via MAPK11 to promote the UCP1-dependent thermogenesis of brown adipose tissue. Binds the clearance receptor NPR3 which removes the hormone from circulation. In terms of biological role, may have a role in cardio-renal homeostasis through regulation of natriuresis, diuresis, vasodilation, and inhibiting aldosterone synthesis. In vitro, promotes the production of cGMP and induces vasodilation. May promote natriuresis, at least in part, by enhancing prostaglandin E2 synthesis resulting in the inhibition of renal Na+-K+-ATPase. However reports on the involvement of this peptide in mammal blood volume and blood pressure homeostasis are conflicting; according to a report, in vivo it is not sufficient to activate cGMP and does not inhibit collecting duct transport nor effect diuresis and natriuresis. Appears to bind to specific receptors that are distinct from the receptors bound by atrial natriuretic peptide and vessel dilator. Possibly enhances protein excretion in urine by decreasing proximal tubular protein reabsorption. Functionally, may have a role in cardio-renal homeostasis through regulation of natriuresis, diuresis, and vasodilation. In vitro, promotes the production of cGMP and induces vasodilation. May promote natriuresis, at least in part, by enhancing prostaglandin E2 synthesis resulting in the inhibition of renal Na+-K+-ATPase. However reports on the involvement of this peptide in mammal blood volume and blood pressure homeostasis are conflicting; according to a report it is not sufficient to activate cGMP and does not inhibit collecting duct transport nor effect diuresis and natriuresis. Appears to bind to specific receptors that are distinct from the receptors bound by the atrial natriuretic and long-acting natriuretic peptides. Possibly functions in protein excretion in urine by maintaining the integrity of the proximal tubules and enhancing protein excretion by decreasing proximal tubular protein reabsorption. Its function is as follows. May have a role in cardio-renal homeostasis through regulation of diuresis and inhibiting aldosterone synthesis. In vitro, promotes the production of cGMP and induces vasodilation. May promote natriuresis, at least in part, by enhancing prostaglandin E2 synthesis resulting in the inhibition of renal Na+-K+-ATPase. May have a role in potassium excretion but not sodium excretion (natriuresis). Possibly enhances protein excretion in urine by decreasing proximal tubular protein reabsorption. Hormone produced in the kidneys that appears to be important for maintaining cardio-renal homeostasis. Mediates vasodilation, natriuresis and diuresis primarily in the renal system, in order to maintain the extracellular fluid volume and control the fluid-electrolyte balance. Specifically binds and stimulates cGMP production by renal transmembrane receptors, likely NPR1. Urodilatin not ANP, may be the natriuretic peptide responsible for the regulation of sodium and water homeostasis in the kidney. In terms of biological role, may have a role in cardio-renal homeostasis through regulation of natriuresis and vasodilation. In vivo promotes natriuresis and in vitro, vasodilates renal artery strips. Functionally, may have a role in cardio-renal homeostasis through regulation of regulation of natriuresis and vasodilation. In vivo promotes natriuresis. In vitro, vasodilates intestinal smooth muscle but not smooth muscle strips. Its function is as follows. May have a role in cardio-renal homeostasis through regulation of natriuresis and vasodilation. In vivo promotes natriuresis. In vitro, selectively vasodilates intestinal and vascular smooth muscle strips. May have a role in cardio-renal homeostasis through regulation of natriuresis and vasodilation. In vivo promotes natriuresis. In vitro, selectively vasodilates intestinal smooth muscle but not vascular smooth muscle strips. The chain is Natriuretic peptides A (NPPA) from Canis lupus familiaris (Dog).